The following is a 67-amino-acid chain: MGTVRERAIKRVAYKLVKQYPDLWTEDFEHNKMILSQIAEIKSKVYRNRIAGYITRLKVRERQGTLV.

This sequence belongs to the eukaryotic ribosomal protein eS17 family.

The protein is Small ribosomal subunit protein eS17 of Korarchaeum cryptofilum (strain OPF8).